Reading from the N-terminus, the 185-residue chain is Large ribosomal subunit protein uL5m (185 aa).

Belongs to the universal ribosomal protein uL5 family. As to quaternary structure, component of the mitochondrial ribosome large subunit.

The protein resides in the mitochondrion. The chain is Large ribosomal subunit protein uL5m (RPL5) from Arabidopsis thaliana (Mouse-ear cress).